A 398-amino-acid polypeptide reads, in one-letter code: Cholinephosphotransferase 1 (398 aa).

Ala2 bears the N-acetylalanine mark. The Cytoplasmic segment spans residues 2–62 (AAGAGARPAP…LLQWIPLWIA (61 aa)). The chain crosses the membrane as a helical span at residues 63–83 (PNTITLFGLAINLFTTLVLIF). Asn64 contacts CDP-choline. The Lumenal portion of the chain corresponds to 84-93 (YCPTVTEEAP). The chain crosses the membrane as a helical span at residues 94 to 118 (YWTYLLCALGLFIYQSLDAIDGKQA). Residues Asp111 and Asp114 each coordinate Mg(2+). Residue Arg119 coordinates CDP-choline. At 119–125 (RRTNSCS) the chain is on the cytoplasmic side. A helical membrane pass occupies residues 126–150 (PLGELFDHGCDSLSTVFMAIGASIA). Mg(2+) is bound at residue Asp132. The active-site Proton acceptor is His133. Asp136 serves as a coordination point for Mg(2+). Residues 151-160 (VRLGTHPDWL) are Lumenal-facing. A helical membrane pass occupies residues 161 to 179 (FFCSFVGMFMFYCAHWQTY). At 180–190 (VSGVLRFGRVD) the chain is on the cytoplasmic side. A helical membrane pass occupies residues 191-207 (VTEIQVALVIVFLLSTF). Residues 208-222 (GGAMMWDYTIPILEI) are Lumenal-facing. A helical transmembrane segment spans residues 223–248 (KLKILPVLGVVGGLIFSCSNYFHVIL). Residues 249 to 265 (HGGVGKNGSTIAGTSVL) are Cytoplasmic-facing. A helical transmembrane segment spans residues 266–281 (SPGLHIGLIIILAIMI). Residues 282–293 (YKKSATNVFEKH) lie on the Lumenal side of the membrane. Residues 294-316 (PCLYTLMFGCVFAKVAQKLVIAH) form a helical membrane-spanning segment. Over 317-329 (MTKSELYLQDTVF) the chain is Cytoplasmic. The helical transmembrane segment at 330-339 (IGPGLLFLDQ) threads the bilayer. The Lumenal segment spans residues 340–346 (YFNNFID). The helical transmembrane segment at 347–376 (EYVVLWIAMVITSFDMMIYFSSLCLQISRH) threads the bilayer. Topologically, residues 377–398 (LHLSIFKTSYQQAPEQVHKHID) are cytoplasmic.

This sequence belongs to the CDP-alcohol phosphatidyltransferase class-I family. Requires Mg(2+) as cofactor. The cofactor is Mn(2+).

It is found in the golgi apparatus membrane. The catalysed reaction is CDP-choline + a 1,2-diacyl-sn-glycerol = a 1,2-diacyl-sn-glycero-3-phosphocholine + CMP + H(+). The enzyme catalyses 1-octadecanoyl-2-(5Z,8Z,11Z,14Z-eicosatetraenoyl)-sn-glycerol + CDP-choline = 1-octadecanoyl-2-(5Z,8Z,11Z,14Z-eicosatetraenoyl)-sn-glycero-3-phosphocholine + CMP + H(+). It carries out the reaction 1-hexadecanoyl-2-(9Z-octadecenoyl)-sn-glycerol + CDP-choline = 1-hexadecanoyl-2-(9Z-octadecenoyl)-sn-glycero-3-phosphocholine + CMP + H(+). It catalyses the reaction 1-hexadecanoyl-2-(4Z,7Z,10Z,13Z,16Z,19Z-docosahexaenoyl)-sn-glycerol + CDP-choline = 1-hexadecanoyl-2-(4Z,7Z,10Z,13Z,16Z,19Z-docosahexaenoyl)-sn-glycero-3-phosphocholine + CMP + H(+). The catalysed reaction is 1,2-dioctanoyl-sn-glycerol + CDP-choline = 1,2-dioctanoyl-sn-glycero-3-phosphocholine + CMP + H(+). Its pathway is phospholipid metabolism; phosphatidylcholine biosynthesis; phosphatidylcholine from phosphocholine: step 2/2. Its function is as follows. Catalyzes the final step of de novo phosphatidylcholine (PC) synthesis, i.e. the transfer of choline phosphate from CDP-choline to the free hydroxyl of a diacylglycerol (DAG), producing a PC. It thereby plays a central role in the formation and maintenance of vesicular membranes. The chain is Cholinephosphotransferase 1 from Rattus norvegicus (Rat).